A 541-amino-acid chain; its full sequence is Membrane protein insertase YidC (541 aa).

Transmembrane regions (helical) follow at residues asparagine 6–aspartate 26, phenylalanine 349–phenylalanine 369, glycine 420–leucine 440, leucine 457–methionine 477, and valine 500–glycine 520.

This sequence belongs to the OXA1/ALB3/YidC family. Type 1 subfamily. Interacts with the Sec translocase complex via SecD. Specifically interacts with transmembrane segments of nascent integral membrane proteins during membrane integration.

Its subcellular location is the cell inner membrane. Functionally, required for the insertion and/or proper folding and/or complex formation of integral membrane proteins into the membrane. Involved in integration of membrane proteins that insert both dependently and independently of the Sec translocase complex, as well as at least some lipoproteins. Aids folding of multispanning membrane proteins. This is Membrane protein insertase YidC from Shewanella sp. (strain MR-7).